An 85-amino-acid chain; its full sequence is Neurotoxin 60.35 (85 aa).

A signal peptide spans 1 to 23 (MKFCVAVSLLIIASMAGVISVSG). The 62-residue stretch at 24 to 85 (YDVYPRDYAG…NFLSVIWKQC (62 aa)) folds into the LCN-type CS-alpha/beta domain. 3 disulfides stabilise this stretch: Cys-38/Cys-60, Cys-46/Cys-65, and Cys-50/Cys-67.

Belongs to the long (3 C-C) scorpion toxin superfamily. Expressed by the venom gland.

It is found in the secreted. The sequence is that of Neurotoxin 60.35 from Lychas mucronatus (Chinese swimming scorpion).